The primary structure comprises 497 residues: Bifunctional protein GlmU (497 aa).

The segment at 1–252 is pyrophosphorylase; the sequence is MSQPSARPSA…VWEVEGANDR (252 aa). Residues 14–17, lysine 28, glutamine 86, 91–92, 115–117, glycine 154, glutamate 169, asparagine 192, and asparagine 250 contribute to the UDP-N-acetyl-alpha-D-glucosamine site; these read LAAG, GT, and YGD. Residue aspartate 117 participates in Mg(2+) binding. Asparagine 250 serves as a coordination point for Mg(2+). A linker region spans residues 253 to 273; it reads RQLSDLGRRLNERVLRHWMKE. Positions 274 to 497 are N-acetyltransferase; it reads GVTVVDPSST…AGAEGSGAQG (224 aa). Arginine 355 and lysine 373 together coordinate UDP-N-acetyl-alpha-D-glucosamine. Histidine 385 (proton acceptor) is an active-site residue. UDP-N-acetyl-alpha-D-glucosamine is bound by residues tyrosine 388 and asparagine 399. Residues 408–409, serine 427, and alanine 445 contribute to the acetyl-CoA site; that span reads NY. Positions 473-497 are disordered; sequence PAKRPGTSSAEAARAAGAEGSGAQG. Residues 480–490 are compositionally biased toward low complexity; that stretch reads SSAEAARAAGA.

The protein in the N-terminal section; belongs to the N-acetylglucosamine-1-phosphate uridyltransferase family. In the C-terminal section; belongs to the transferase hexapeptide repeat family. In terms of assembly, homotrimer. It depends on Mg(2+) as a cofactor.

It localises to the cytoplasm. It carries out the reaction alpha-D-glucosamine 1-phosphate + acetyl-CoA = N-acetyl-alpha-D-glucosamine 1-phosphate + CoA + H(+). The catalysed reaction is N-acetyl-alpha-D-glucosamine 1-phosphate + UTP + H(+) = UDP-N-acetyl-alpha-D-glucosamine + diphosphate. The protein operates within nucleotide-sugar biosynthesis; UDP-N-acetyl-alpha-D-glucosamine biosynthesis; N-acetyl-alpha-D-glucosamine 1-phosphate from alpha-D-glucosamine 6-phosphate (route II): step 2/2. It participates in nucleotide-sugar biosynthesis; UDP-N-acetyl-alpha-D-glucosamine biosynthesis; UDP-N-acetyl-alpha-D-glucosamine from N-acetyl-alpha-D-glucosamine 1-phosphate: step 1/1. It functions in the pathway bacterial outer membrane biogenesis; LPS lipid A biosynthesis. Functionally, catalyzes the last two sequential reactions in the de novo biosynthetic pathway for UDP-N-acetylglucosamine (UDP-GlcNAc). The C-terminal domain catalyzes the transfer of acetyl group from acetyl coenzyme A to glucosamine-1-phosphate (GlcN-1-P) to produce N-acetylglucosamine-1-phosphate (GlcNAc-1-P), which is converted into UDP-GlcNAc by the transfer of uridine 5-monophosphate (from uridine 5-triphosphate), a reaction catalyzed by the N-terminal domain. This chain is Bifunctional protein GlmU, found in Micrococcus luteus (strain ATCC 4698 / DSM 20030 / JCM 1464 / CCM 169 / CCUG 5858 / IAM 1056 / NBRC 3333 / NCIMB 9278 / NCTC 2665 / VKM Ac-2230) (Micrococcus lysodeikticus).